The primary structure comprises 964 residues: uncharacterized protein (964 aa).

Disordered regions lie at residues 1 to 31 (MDSE…SDCE) and 169 to 199 (EETY…DEIS). The span at 10–27 (HSICNSVSSGENYKSPES) shows a compositional bias: polar residues. A coiled-coil region spans residues 656-840 (EVMESLQVEI…LILNQTSMAK (185 aa)).

This is an uncharacterized protein from Caenorhabditis elegans.